The chain runs to 469 residues: Protein RUFY3 (469 aa).

Phosphothreonine is present on residues T5 and T12. 2 positions are modified to phosphoserine: S34 and S49. Residue T51 is modified to Phosphothreonine. In terms of domain architecture, RUN spans 95–227 (DSDYAPLQQF…IDANFCMKGE (133 aa)). 2 coiled-coil regions span residues 271 to 362 (NRHL…VEKE) and 422 to 463 (KSEL…AANK).

Interacts with PAK1. Interacts (via C-terminus) with Ras-related Rab-5 proteins. Interacts (via C-terminus) with Ras-related Rap-2 proteins. Interacts with PIK3CA and PIK3R1. Interacts (via N-terminus) with FSCN1; this interaction induces neuron axon development. Interacts with DBN1. Interacts (via the second coiled coil) with GTP-, but not GDP-bound ARL8A and ARL8B. Interacts with dynactin/DCTN1 and the dynein intermediate chain DYNC1I1/2. Directly interacts with DYNC1LI1. In terms of processing, isoform 1 is partially phosphorylated. Phosphorylated by PAK1. As to expression, expressed in brain (at protein level).

It is found in the cytoplasm. Its subcellular location is the endomembrane system. It localises to the cell projection. The protein localises to the invadopodium. The protein resides in the growth cone. It is found in the perikaryon. Its subcellular location is the filopodium. It localises to the lamellipodium. The protein localises to the lysosome. ARL8 effector that promotes the coupling of endolysosomes to dynein-dynactin for retrograde transport along microtubules. Acts by binding both GTP-bound ARL8 and dynein-dynactin. In nonneuronal cells, promotes concentration of endolysosomes in the juxtanuclear area. In hippocampal neurons, drives retrograde transport of endolysosomes from the axon to the soma. Plays a role in the generation of neuronal polarity formation and axon growth. Implicated in the formation of a single axon by developing neurons. May inhibit the formation of additional axons by inhibition of PI3K in minor neuronal processes. Plays a role in the formation of F-actin-enriched protrusive structures at the cell periphery. Plays a role in cytoskeletal organization by regulating the subcellular localization of FSCN1 and DBN1 at axonal growth cones. This is Protein RUFY3 from Rattus norvegicus (Rat).